A 208-amino-acid polypeptide reads, in one-letter code: Large ribosomal subunit protein bL25 (208 aa).

The protein belongs to the bacterial ribosomal protein bL25 family. CTC subfamily. In terms of assembly, part of the 50S ribosomal subunit; part of the 5S rRNA/L5/L18/L25 subcomplex. Contacts the 5S rRNA. Binds to the 5S rRNA independently of L5 and L18.

This is one of the proteins that binds to the 5S RNA in the ribosome where it forms part of the central protuberance. The chain is Large ribosomal subunit protein bL25 from Burkholderia thailandensis (strain ATCC 700388 / DSM 13276 / CCUG 48851 / CIP 106301 / E264).